A 455-amino-acid polypeptide reads, in one-letter code: Kynurenine 3-monooxygenase (455 aa).

The protein belongs to the aromatic-ring hydroxylase family. KMO subfamily. FAD serves as cofactor.

It catalyses the reaction L-kynurenine + NADPH + O2 + H(+) = 3-hydroxy-L-kynurenine + NADP(+) + H2O. The protein operates within cofactor biosynthesis; NAD(+) biosynthesis; quinolinate from L-kynurenine: step 1/3. Catalyzes the hydroxylation of L-kynurenine (L-Kyn) to form 3-hydroxy-L-kynurenine (L-3OHKyn). Required for synthesis of quinolinic acid. In Stenotrophomonas maltophilia (strain K279a), this protein is Kynurenine 3-monooxygenase.